The chain runs to 66 residues: MPGVYLEDSDNFEIALRRFKKQVEKAGVLSELKKRQHYEKPSVQRKKKKAAARKRLIKKMRKMSMG.

This sequence belongs to the bacterial ribosomal protein bS21 family.

This is Small ribosomal subunit protein bS21 from Maridesulfovibrio salexigens (strain ATCC 14822 / DSM 2638 / NCIMB 8403 / VKM B-1763) (Desulfovibrio salexigens).